Consider the following 541-residue polypeptide: GMP synthase [glutamine-hydrolyzing] (541 aa).

One can recognise a Glutamine amidotransferase type-1 domain in the interval 17–212 (TILVLDFGSQ…AVDICQSTTD (196 aa)). The active-site Nucleophile is Cys-93. Active-site residues include His-186 and Glu-188. Residues 213–416 (WTMGKFVDQE…LGIPEDLVWR (204 aa)) enclose the GMPS ATP-PPase domain. 241–247 (SGGVDST) contributes to the ATP binding site. Residues Arg-315, Asp-478, Lys-533, and Glu-539 each contribute to the XMP site.

Homodimer. Mg(2+) serves as cofactor.

The protein resides in the cytoplasm. Its subcellular location is the cytosol. The catalysed reaction is XMP + L-glutamine + ATP + H2O = GMP + L-glutamate + AMP + diphosphate + 2 H(+). Its pathway is purine metabolism; GMP biosynthesis; GMP from XMP (L-Gln route): step 1/1. Its function is as follows. Catalyzes the conversion of xanthine monophosphate (XMP) to GMP in the presence of glutamine and ATP through an adenyl-XMP intermediate. The chain is GMP synthase [glutamine-hydrolyzing] (GUA1) from Phaeosphaeria nodorum (strain SN15 / ATCC MYA-4574 / FGSC 10173) (Glume blotch fungus).